An 845-amino-acid chain; its full sequence is Leucine--tRNA ligase (845 aa).

The 'HIGH' region signature appears at 40–51 (PYPSGAGLHVGH). Positions 623–627 (KMSKS) match the 'KMSKS' region motif. An ATP-binding site is contributed by Lys-626.

This sequence belongs to the class-I aminoacyl-tRNA synthetase family.

Its subcellular location is the cytoplasm. It catalyses the reaction tRNA(Leu) + L-leucine + ATP = L-leucyl-tRNA(Leu) + AMP + diphosphate. The polypeptide is Leucine--tRNA ligase (Protochlamydia amoebophila (strain UWE25)).